A 479-amino-acid polypeptide reads, in one-letter code: MGPGGTCPWSSRLSGFRVRTWIEPVVASTQVAGSLYDAGLLLVVKESFKSEAGGSSNYSANQSLVEYQEDQQQKAISNFNIIYNLVLGLTPLLSAYGLGWLSDRYHRKISICTAMLGFLLSRIGLLLKVMLDWPVEVMYGAAALNGLCGSFSAYWSGVMALGSLGCSEGRRSVRLILIDLVLGLAGFSGSMASGHLFKQIVGHSAQGLLLTACSVGCAAFALFYSLFVLKVPESKPNKVHPTVDTVSGMMGTYRTLDPDQQDKQNVPRNPRTPGKGKSSQREVVALLFVGAIIYDLAAVGTVDVMALFVLKEPLHWNQVQLGYGMASGYIIFITSFLGVLVFSRCFRDTTMIIIGMLSFGSGALLLAFVKETYMFYIARAIMLFALIPITTIRSAMSKLIKDSSYGKIFVILQLCLTLTGVVTSTIYNKIYQLTLDKFIGTCFVLSSFLSFLAIVPIGVVAYKQVPRSQQGECAEKQRS.

At 1–23 the chain is on the cytoplasmic side; that stretch reads MGPGGTCPWSSRLSGFRVRTWIE. A helical transmembrane segment spans residues 24–44; sequence PVVASTQVAGSLYDAGLLLVV. Residues 45 to 80 lie on the Extracellular side of the membrane; that stretch reads KESFKSEAGGSSNYSANQSLVEYQEDQQQKAISNFN. N-linked (GlcNAc...) asparagine glycosylation is found at Asn-57 and Asn-61. A helical transmembrane segment spans residues 81–101; the sequence is IIYNLVLGLTPLLSAYGLGWL. Topologically, residues 102 to 110 are cytoplasmic; the sequence is SDRYHRKIS. The chain crosses the membrane as a helical span at residues 111 to 131; sequence ICTAMLGFLLSRIGLLLKVML. The Extracellular portion of the chain corresponds to 132–140; sequence DWPVEVMYG. Residues 141 to 161 form a helical membrane-spanning segment; it reads AAALNGLCGSFSAYWSGVMAL. Over 162–174 the chain is Cytoplasmic; sequence GSLGCSEGRRSVR. A helical membrane pass occupies residues 175 to 195; that stretch reads LILIDLVLGLAGFSGSMASGH. Over 196–207 the chain is Extracellular; it reads LFKQIVGHSAQG. Residues 208-228 traverse the membrane as a helical segment; the sequence is LLLTACSVGCAAFALFYSLFV. Residues 229 to 281 are Cytoplasmic-facing; the sequence is LKVPESKPNKVHPTVDTVSGMMGTYRTLDPDQQDKQNVPRNPRTPGKGKSSQR. Residues 255-277 are disordered; the sequence is TLDPDQQDKQNVPRNPRTPGKGK. The helical transmembrane segment at 282-302 threads the bilayer; the sequence is EVVALLFVGAIIYDLAAVGTV. Residues 303–321 are Extracellular-facing; that stretch reads DVMALFVLKEPLHWNQVQL. The chain crosses the membrane as a helical span at residues 322 to 342; sequence GYGMASGYIIFITSFLGVLVF. At 343–348 the chain is on the cytoplasmic side; that stretch reads SRCFRD. The chain crosses the membrane as a helical span at residues 349–369; it reads TTMIIIGMLSFGSGALLLAFV. The Extracellular portion of the chain corresponds to 370 to 371; that stretch reads KE. The helical transmembrane segment at 372–392 threads the bilayer; that stretch reads TYMFYIARAIMLFALIPITTI. The Cytoplasmic segment spans residues 393-407; that stretch reads RSAMSKLIKDSSYGK. The helical transmembrane segment at 408 to 428 threads the bilayer; the sequence is IFVILQLCLTLTGVVTSTIYN. Topologically, residues 429–441 are extracellular; the sequence is KIYQLTLDKFIGT. The chain crosses the membrane as a helical span at residues 442–462; it reads CFVLSSFLSFLAIVPIGVVAY. The Cytoplasmic portion of the chain corresponds to 463 to 479; that stretch reads KQVPRSQQGECAEKQRS.

It belongs to the major facilitator superfamily. SLC46A family. Glycosylated. As to expression, expressed on cortical epithelial cells in the thymus. Mainly expressed in the thymic cortex and is highly enriched in SCID thymus. Also expressed in lymph nodes, heart, fetal liver, brain, spleen, intestine and kidney, but not in adult liver, skin, skeletal muscle and lung. Expressed in skin epidermis.

The protein localises to the endosome membrane. The protein resides in the cell membrane. The enzyme catalyses N-acetyl-beta-D-glucosaminyl-(1-&gt;4)-1,6-anhydro-N-acetyl-beta-D-muramoyl-L-alanyl-gamma-D-glutamyl-meso-2,6-diaminopimeloyl-D-alanine(out) + n H(+)(out) = N-acetyl-beta-D-glucosaminyl-(1-&gt;4)-1,6-anhydro-N-acetyl-beta-D-muramoyl-L-alanyl-gamma-D-glutamyl-meso-2,6-diaminopimeloyl-D-alanine(in) + n H(+)(in). The catalysed reaction is L-alanyl-gamma-D-glutamyl-meso-2,6-diaminopimelate(out) + n H(+)(out) = L-alanyl-gamma-D-glutamyl-meso-2,6-diaminopimelate(in) + n H(+)(in). It carries out the reaction N-acetyl-D-muramoyl-L-alanyl-D-isoglutamine(out) + n H(+)(out) = N-acetyl-D-muramoyl-L-alanyl-D-isoglutamine(in) + n H(+)(in). It catalyses the reaction 2',3'-cGAMP(out) + n H(+)(out) = 2',3'-cGAMP(in) + n H(+)(in). The enzyme catalyses 3',3'-cGAMP(out) + n H(+)(out) = 3',3'-cGAMP(in) + n H(+)(in). With respect to regulation, down-regulated by the anti-inflammatory drug methotrexate. Proton-coupled transporter that delivers pathogen-associated or danger-associated molecular patterns to cytosolic pattern recognition receptors as part of the innate immune response to microbes or tissue injury. Has selectivity toward muropeptides that contain the amino acid diaminopimelic acid (DAP-type peptidoglycan muropeptides) including Tri-DAP and tracheal toxin (TCT), common in Gram-negative bacteria and Gram-positive bacilli. In the context of immune recognition of skin microbiota, shuttles bacterial muropeptides across the endolysosomal membranes into the cytosol for recognition by NOD1, triggering MYD88-dependent secretion of IL1A and neutrophil recruitment in a pyroptosis-type inflammatory process. To a lesser extent and redundantly, transports muramyl dipeptides derived from most bacterial proteoglycans, eliciting NOD2 receptor activation and downstream inflammatory responses. Postulated to function as an importer of cyclic GMP-AMP dinucleotides (cGAMPs) in monocyte and macrophage cell lineages. Selectively imports cGAMPs derived from pathogenic bacteria such as 3'3'-cGAMP thus providing for differential immune recognition of pathogenic versus commensal bacteria. During tumorigenesis may transport extracellular tumor-derived 2'3'-cGAMP across the plasma membrane of M1-polarized macrophages to activate the anti-tumoral stimulator of interferon genes (STING) pathway. The transport mechanism, its electrogenicity and stoichiometry remain to be elucidated. This is Solute carrier family 46 member 2 from Mus musculus (Mouse).